A 588-amino-acid polypeptide reads, in one-letter code: Aspartate--tRNA ligase (588 aa).

Position 172 (E172) interacts with L-aspartate. Residues 196 to 199 (QLFK) are aspartate. An L-aspartate-binding site is contributed by R218. ATP is bound by residues 218 to 220 (RDE) and Q227. H449 contacts L-aspartate. E483 is an ATP binding site. Position 490 (R490) interacts with L-aspartate. Residue 535-538 (GLDR) coordinates ATP.

The protein belongs to the class-II aminoacyl-tRNA synthetase family. Type 1 subfamily. As to quaternary structure, homodimer.

The protein localises to the cytoplasm. The enzyme catalyses tRNA(Asp) + L-aspartate + ATP = L-aspartyl-tRNA(Asp) + AMP + diphosphate. In terms of biological role, catalyzes the attachment of L-aspartate to tRNA(Asp) in a two-step reaction: L-aspartate is first activated by ATP to form Asp-AMP and then transferred to the acceptor end of tRNA(Asp). The protein is Aspartate--tRNA ligase of Pasteurella multocida (strain Pm70).